A 460-amino-acid chain; its full sequence is Argininosuccinate lyase (460 aa).

This sequence belongs to the lyase 1 family. Argininosuccinate lyase subfamily.

It localises to the cytoplasm. The catalysed reaction is 2-(N(omega)-L-arginino)succinate = fumarate + L-arginine. It functions in the pathway amino-acid biosynthesis; L-arginine biosynthesis; L-arginine from L-ornithine and carbamoyl phosphate: step 3/3. This chain is Argininosuccinate lyase, found in Leuconostoc mesenteroides subsp. mesenteroides (strain ATCC 8293 / DSM 20343 / BCRC 11652 / CCM 1803 / JCM 6124 / NCDO 523 / NBRC 100496 / NCIMB 8023 / NCTC 12954 / NRRL B-1118 / 37Y).